A 1077-amino-acid chain; its full sequence is Error-prone DNA polymerase (1077 aa).

This sequence belongs to the DNA polymerase type-C family. DnaE2 subfamily.

It is found in the cytoplasm. The catalysed reaction is DNA(n) + a 2'-deoxyribonucleoside 5'-triphosphate = DNA(n+1) + diphosphate. DNA polymerase involved in damage-induced mutagenesis and translesion synthesis (TLS). It is not the major replicative DNA polymerase. The chain is Error-prone DNA polymerase from Brucella abortus biovar 1 (strain 9-941).